A 64-amino-acid chain; its full sequence is Prokaryotic ubiquitin-like protein Pup (64 aa).

The segment at 1-35 (MAQGGQVSAGGGRRDDDEPIEQTSGAGTQQVNVTG) is disordered. Positions 21 to 33 (EQTSGAGTQQVNV) are enriched in polar residues. Residues 21–58 (EQTSGAGTQQVNVTGTDDLLDEIDGLLENNAEEFVRSY) are ARC ATPase binding. Glutamine 64 is subject to Deamidated glutamine. An Isoglutamyl lysine isopeptide (Gln-Lys) (interchain with K-? in acceptor proteins) cross-link involves residue glutamine 64.

This sequence belongs to the prokaryotic ubiquitin-like protein family. As to quaternary structure, strongly interacts with the proteasome-associated ATPase ARC through a hydrophobic interface; the interacting region of Pup lies in its C-terminal half. There is one Pup binding site per ARC hexamer ring. In terms of processing, is modified by deamidation of its C-terminal glutamine to glutamate by the deamidase Dop, a prerequisite to the subsequent pupylation process.

Its pathway is protein degradation; proteasomal Pup-dependent pathway. Protein modifier that is covalently attached to lysine residues of substrate proteins, thereby targeting them for proteasomal degradation. The tagging system is termed pupylation. The sequence is that of Prokaryotic ubiquitin-like protein Pup from Corynebacterium jeikeium (strain K411).